A 674-amino-acid chain; its full sequence is Secretin GspD (674 aa).

The N-terminal stretch at 1–24 (MKYWLKKSSWLLAGSLLSTPLAMA) is a signal peptide. The tract at residues 25 to 121 (NEFSASFKGT…VLSGEERANG (97 aa)) is N0. The segment at 123 to 187 (EVITQVVAVK…EIIRRVDQAG (65 aa)) is N1. Residues 188-261 (DKEIEVVELN…LIKQLDVEMA (74 aa)) are N2. Residues 264–338 (GNNRVVYLKY…AMLEVIGQLD (75 aa)) are N3. The tract at residues 343-612 (QVLIEALIVE…VFIKPTIIRD (270 aa)) is secretin. The cap gate stretch occupies residues 395–417 (DTTQTKAVYDTNNNFLRNETTTT). The s domain stretch occupies residues 614–674 (VTADGITQRK…AFIEQMEAKQ (61 aa)).

Belongs to the bacterial secretin family. GSP D subfamily. Forms a cylindrical channel with 15 subunits; unlike E.coli no 16-subunit channels are seen. The closed pentadeacameric channels are 195 Angstroms long and 145 Angstroms in diameter. Each subunit turns in a clock-wise manner around the channel.

It is found in the cell outer membrane. Functionally, involved in a type II secretion system (T2SS, formerly general secretion pathway, GSP) for the export of proteins. Required for secretion of cholera toxin through the outer membrane. This subunit forms the outer membrane channel. The sequence is that of Secretin GspD (epsD) from Vibrio cholerae serotype O1 (strain ATCC 39315 / El Tor Inaba N16961).